Consider the following 473-residue polypeptide: Ribulose bisphosphate carboxylase large chain 1 (473 aa).

Substrate contacts are provided by N116 and T166. Residue K168 is the Proton acceptor of the active site. K170 lines the substrate pocket. Positions 194, 196, and 197 each coordinate Mg(2+). Residue K194 is modified to N6-carboxylysine. The Proton acceptor role is filled by H287. Residues R288, H320, and S372 each coordinate substrate.

Belongs to the RuBisCO large chain family. Type I subfamily. As to quaternary structure, heterohexadecamer of 8 large chains and 8 small chains. Requires Mg(2+) as cofactor.

It carries out the reaction 2 (2R)-3-phosphoglycerate + 2 H(+) = D-ribulose 1,5-bisphosphate + CO2 + H2O. It catalyses the reaction D-ribulose 1,5-bisphosphate + O2 = 2-phosphoglycolate + (2R)-3-phosphoglycerate + 2 H(+). Functionally, ruBisCO catalyzes two reactions: the carboxylation of D-ribulose 1,5-bisphosphate, the primary event in carbon dioxide fixation, as well as the oxidative fragmentation of the pentose substrate. Both reactions occur simultaneously and in competition at the same active site. This is Ribulose bisphosphate carboxylase large chain 1 from Acidithiobacillus ferrooxidans (Thiobacillus ferrooxidans).